Here is a 314-residue protein sequence, read N- to C-terminus: uncharacterized protein (314 aa).

Residues 1–29 (MMRLIRTLPLRCFKTRIRRQGSLLCLRCF) constitute a mitochondrion transit peptide. The disordered stretch occupies residues 52 to 74 (SSSPLSKNKEKQEKPEKENEGKH). Over residues 58-74 (KNKEKQEKPEKENEGKH) the composition is skewed to basic and acidic residues. A coiled-coil region spans residues 177–207 (LNEHHLQLLKLKRELNSIHDELNEIIIDLLQ). A helical transmembrane segment spans residues 262–279 (GLLVILVLVCSIMIGVSA). The interval 281 to 314 (KKERPGLQEPEEPEILAPKEDIDTTFPQDQHDID) is disordered.

It is found in the mitochondrion membrane. This is an uncharacterized protein from Saccharomyces cerevisiae (strain ATCC 204508 / S288c) (Baker's yeast).